The chain runs to 256 residues: Trypsinogen-like protein 3 (256 aa).

Residues 1–14 (MILLLVLALGLAGA) form the signal peptide. Residues 15 to 237 (SPLGEYKECP…YNDWIHQVMA (223 aa)) enclose the Peptidase S1 domain. Cystine bridges form between C23–C153, C41–C57, C125–C226, C132–C199, C164–C180, and C189–C213.

The protein belongs to the peptidase S1 family.

The chain is Trypsinogen-like protein 3 (trp3) from Pseudopleuronectes americanus (Winter flounder).